The primary structure comprises 30 residues: U1-poneritoxin-Ng3e (30 aa).

As to expression, expressed by the venom gland.

The protein resides in the secreted. Has activity against some Gram-positive bacteria and S.cerevisiae. Has a non-hemolytic activity. The sequence is that of U1-poneritoxin-Ng3e from Neoponera goeldii (Ponerine ant).